A 476-amino-acid chain; its full sequence is Cysteine--tRNA ligase (476 aa).

Cysteine 30 is a Zn(2+) binding site. Residues 32-42 (PTVYNYIHIGN) carry the 'HIGH' region motif. Residues cysteine 215, histidine 240, and glutamate 244 each contribute to the Zn(2+) site. The 'KMSKS' region signature appears at 274 to 278 (KMSKS). Residue lysine 277 participates in ATP binding.

This sequence belongs to the class-I aminoacyl-tRNA synthetase family. Monomer. Requires Zn(2+) as cofactor.

It is found in the cytoplasm. The enzyme catalyses tRNA(Cys) + L-cysteine + ATP = L-cysteinyl-tRNA(Cys) + AMP + diphosphate. This chain is Cysteine--tRNA ligase, found in Lactobacillus helveticus (strain DPC 4571).